Here is a 139-residue protein sequence, read N- to C-terminus: MILLDTNVISEPQRREPNAHVLDWIDAQALETLYLSTITVAELRAGIALMPVGKRQDSLRENLEKHLLPMFANRVLSFDMTCTKAYAELLAKSRAAGLAVETADAFIAAIALANGFTVATRDTGPFEAAGLNVINPWEA.

In terms of domain architecture, PINc spans 2 to 136; the sequence is ILLDTNVISE…EAAGLNVINP (135 aa). Residues aspartate 5 and aspartate 104 each contribute to the Mg(2+) site.

This sequence belongs to the PINc/VapC protein family. Requires Mg(2+) as cofactor.

In terms of biological role, toxic component of a type II toxin-antitoxin (TA) system. An RNase. Involved in plasmid stability. In Pseudomonas syringae pv. tomato (strain ATCC BAA-871 / DC3000), this protein is Plasmid stability protein StbB (stbB).